Reading from the N-terminus, the 345-residue chain is Isopentenyl-diphosphate delta-isomerase (345 aa).

14–15 (RK) contributes to the substrate binding site. Residues Ser71, 72 to 74 (SMT), Ser102, and Asn130 each bind FMN. 102–104 (SMR) lines the substrate pocket. Substrate is bound at residue Gln165. Glu166 is a binding site for Mg(2+). FMN contacts are provided by residues Lys197, Thr227, 277–279 (GLK), and 298–299 (AG).

Belongs to the IPP isomerase type 2 family. In terms of assembly, homooctamer. Dimer of tetramers. FMN serves as cofactor. NADPH is required as a cofactor. The cofactor is Mg(2+).

The protein localises to the cytoplasm. It catalyses the reaction isopentenyl diphosphate = dimethylallyl diphosphate. Involved in the biosynthesis of isoprenoids. Catalyzes the 1,3-allylic rearrangement of the homoallylic substrate isopentenyl (IPP) to its allylic isomer, dimethylallyl diphosphate (DMAPP). This Rickettsia felis (strain ATCC VR-1525 / URRWXCal2) (Rickettsia azadi) protein is Isopentenyl-diphosphate delta-isomerase.